A 211-amino-acid chain; its full sequence is Mitotic spindle assembly checkpoint protein MAD2B (211 aa).

One can recognise an HORMA domain in the interval 13–203 (QVVADVLSEF…SDILKMQLYV (191 aa)).

As to quaternary structure, homooligomer. Interacts with REV1. Interacts with FZR1 (in complex with the anaphase promoting complex APC). May interact with CDC20. Heterodimer with REV3L. This dimer forms the minimal DNA polymerase zeta complex (Pol-zeta2), with REV3L bearing DNA polymerase catalytic activity, although its activity is very low in this context. Component of the tetrameric Pol-zeta complex (Pol-zeta4), which consists of REV3L, MAD2L2, POLD2 and POLD3; Pol-zeta4 is the fully active form of DNA polymerase zeta. Component of the shieldin complex, consisting of SHLD1, SHLD2, SHLD3 and MAD2L2/REV7. Within the complex, SHLD2 forms a scaffold which interacts with a SHLD3-MAD2L2 subcomplex via its N-terminus, and with SHLD1 via its C-terminus.

The protein localises to the nucleus. The protein resides in the cytoplasm. It localises to the cytoskeleton. Its subcellular location is the spindle. It is found in the chromosome. Functionally, adapter protein able to interact with different proteins and involved in different biological processes. Mediates the interaction between the error-prone DNA polymerase zeta catalytic subunit REV3L and the inserter polymerase REV1, thereby mediating the second polymerase switching in translesion DNA synthesis. Translesion DNA synthesis releases the replication blockade of replicative polymerases, stalled in presence of DNA lesions. May also play a role in signal transduction in response to DNA damage. May regulate the activation of the anaphase promoting complex APC thereby regulating progression through the cell cycle. Component of the shieldin complex, which plays an important role in repair of DNA double-stranded breaks (DSBs). During G1 and S phase of the cell cycle, the complex functions downstream of TP53BP1 to promote non-homologous end joining (NHEJ) and suppress DNA end resection. Through transcriptional regulation may play a role in epithelial-mesenchymal transdifferentiation. The polypeptide is Mitotic spindle assembly checkpoint protein MAD2B (MAD2L2) (Gallus gallus (Chicken)).